Reading from the N-terminus, the 614-residue chain is MEMETDEGINSLKARIETQHKSHMYMLSSVQSVIPNFVSSLDLSLKVLSSFNHRPFAPTPPLTNFNPPKSSSLQQLPQKPSVKTLKTSLVVTTNPVLEKVTPLSVVLSMVAVCLLSRLPFMEIDSSTLWRKLENDETFTPQDKAAFQELAGDSGGPTLAVEIALRSMADDNGAVELEEFAVSGKSRIMVLNIDRTRLLRQLPETAQHQLQQQQDELSLGDGNMNQNQQQIAKCSMNLEDVDALINKKSFREMQKYETAKELLKIIQTPSIREAAVAAKFKTKGGSQMRPYCDLPTKEDCRRRTGSFIACNKLHFRRIIALHTDINLGDCPFLRTCRHMNTCKYVHYEEDPTPDLPPTMMCAPPPPLKPLKQQRAEYCSEAELGQPQWINCDIRNFRMDILGKFGVIMADPPWDIHMELPYGTMADDEMRTLNVPALQTHGLIFLWVTGRAMELGRECLERWGYKCVEEIIWVKTNQLQRIIRTGRTGHWLNHSKEHCLVGIKGSPEVNRNIDTNVIVSEVRETSRKPDEMYAMMERISPGTRKVELFARMHNTHAGWMSLGNQLSGVRLVDEGLRARFKAAYPDVEVQPASPSRASAMELDSSVAAQTTTSAMM.

The disordered stretch occupies residues 59 to 78; that stretch reads TPPLTNFNPPKSSSLQQLPQ. Residues 67 to 78 are compositionally biased toward low complexity; sequence PPKSSSLQQLPQ. S-adenosyl-L-methionine contacts are provided by residues 391 to 392 and Asp-409; that span reads DI. The interval 479-492 is positively charged region required for RNA-binding; it reads RIIRTGRTGHWLNH. Residues Lys-526, 549-552, and 562-563 each bind S-adenosyl-L-methionine; these read RMHN and NQ. The disordered stretch occupies residues 589–614; that stretch reads PASPSRASAMELDSSVAAQTTTSAMM. The span at 604–614 shows a compositional bias: polar residues; sequence VAAQTTTSAMM.

It belongs to the MT-A70-like family.

It is found in the nucleus. The catalysed reaction is an adenosine in mRNA + S-adenosyl-L-methionine = an N(6)-methyladenosine in mRNA + S-adenosyl-L-homocysteine + H(+). Its function is as follows. Putative N6-methyltransferase that methylates adenosine residues of some mRNAs. N6-methyladenosine (m6A), which is present at internal sites of some mRNAs, may play a role in the efficiency of mRNA splicing, transport or translation. The polypeptide is Putative N(6)-adenosine-methyltransferase MT-A70-like (Medicago truncatula (Barrel medic)).